A 422-amino-acid chain; its full sequence is Testin (422 aa).

Residues 92 to 199 enclose the PET domain; it reads MILTSPVAAK…GDVKLPKEVE (108 aa). The tract at residues 135–165 is disordered; sequence QPVAGSEGAQYRKKQLAKQLPAHDQDPSKCH. A compositionally biased stretch (basic and acidic residues) spans 155–165; it reads PAHDQDPSKCH. 3 consecutive LIM zinc-binding domains span residues 234–299, 300–359, and 360–422; these read YYCF…SEKP, RCAG…NHAV, and SCQG…KMSS.

Belongs to the prickle / espinas / testin family.

It is found in the cytoplasm. The protein localises to the cell cortex. It localises to the cell junction. The protein resides in the focal adhesion. Its function is as follows. Scaffold protein that may play a role in cell adhesion, cell spreading and in the reorganization of the actin cytoskeleton. May inhibit cell growth. Regulates cranial neural crest migration. Acts together with prickle1 to control axial elongation. The sequence is that of Testin from Xenopus tropicalis (Western clawed frog).